A 248-amino-acid polypeptide reads, in one-letter code: Triosephosphate isomerase (248 aa).

A Phosphothreonine modification is found at T4. Substrate contacts are provided by N10 and K12. Position 71 is a phosphoserine (S71). The Electrophile role is filled by H95. E165 (proton acceptor) is an active-site residue. Residue S215 is modified to Phosphoserine. Residue K223 forms a Glycyl lysine isopeptide (Lys-Gly) (interchain with G-Cter in ubiquitin) linkage.

It belongs to the triosephosphate isomerase family. Homodimer.

It catalyses the reaction D-glyceraldehyde 3-phosphate = dihydroxyacetone phosphate. It functions in the pathway carbohydrate biosynthesis; gluconeogenesis. Its pathway is carbohydrate degradation; glycolysis; D-glyceraldehyde 3-phosphate from glycerone phosphate: step 1/1. This is Triosephosphate isomerase (TPI1) from Saccharomyces cerevisiae (strain ATCC 204508 / S288c) (Baker's yeast).